Consider the following 40-residue polypeptide: Photosystem II reaction center protein J (40 aa).

The helical transmembrane segment at 8–28 (IPLWIIGTVTGIFGIGLIGIF) threads the bilayer.

Belongs to the PsbJ family. As to quaternary structure, PSII is composed of 1 copy each of membrane proteins PsbA, PsbB, PsbC, PsbD, PsbE, PsbF, PsbH, PsbI, PsbJ, PsbK, PsbL, PsbM, PsbT, PsbX, PsbY, PsbZ, Psb30/Ycf12, at least 3 peripheral proteins of the oxygen-evolving complex and a large number of cofactors. It forms dimeric complexes.

The protein resides in the plastid membrane. In terms of biological role, one of the components of the core complex of photosystem II (PSII). PSII is a light-driven water:plastoquinone oxidoreductase that uses light energy to abstract electrons from H(2)O, generating O(2) and a proton gradient subsequently used for ATP formation. It consists of a core antenna complex that captures photons, and an electron transfer chain that converts photonic excitation into a charge separation. This Cuscuta reflexa (Southern Asian dodder) protein is Photosystem II reaction center protein J.